The sequence spans 307 residues: Farnesol kinase, chloroplastic (307 aa).

Residues 1 to 65 (MATTSTTTKL…TKIRKSSLAA (65 aa)) constitute a chloroplast transit peptide. A run of 7 helical transmembrane segments spans residues 77–97 (VCAF…WGEI), 116–136 (IGLV…GALF), 137–157 (ASLV…GVYH), 177–194 (GPLY…YYWK), 197–217 (PIAI…DIVG), 237–257 (IGMA…FASF), and 265–285 (GMIL…SLPI).

Belongs to the polyprenol kinase family.

The protein resides in the plastid. It localises to the chloroplast membrane. It carries out the reaction (2E,6E)-farnesol + CTP = (2E,6E)-farnesyl phosphate + CDP + H(+). The enzyme catalyses (2E,6E)-farnesol + ATP = (2E,6E)-farnesyl phosphate + ADP + H(+). It catalyses the reaction (2E)-geraniol + ATP = (2E)-geranyl phosphate + ADP + H(+). The catalysed reaction is (2E,6E,10E)-geranylgeraniol + ATP = (2E,6E,10E)-geranylgeranyl phosphate + ADP + H(+). Functionally, kinase involved in negative regulation of abscisic acid (ABA) signaling. Substrate preference is farnesol &gt; geraniol &gt; geranylgeraniol, but has no activity with farnesyl phosphate. Can use CTP &gt; ATP &gt; GTP = UTP as phosphoryl donor. The protein is Farnesol kinase, chloroplastic of Arabidopsis thaliana (Mouse-ear cress).